Here is a 66-residue protein sequence, read N- to C-terminus: ATP synthase F(0) complex subunit 8 (66 aa).

An N-formylmethionine modification is found at Met-1. A helical membrane pass occupies residues 8-24; that stretch reads TWLTMILSMFLTLFIIF. The residue at position 54 (Lys-54) is an N6-acetyllysine; alternate. Lys-54 carries the N6-succinyllysine; alternate modification. Lys-57 is subject to N6-acetyllysine.

The protein belongs to the ATPase protein 8 family. Component of the ATP synthase complex composed at least of ATP5F1A/subunit alpha, ATP5F1B/subunit beta, ATP5MC1/subunit c (homooctomer), MT-ATP6/subunit a, MT-ATP8/subunit 8, ATP5ME/subunit e, ATP5MF/subunit f, ATP5MG/subunit g, ATP5MK/subunit k, ATP5MJ/subunit j, ATP5F1C/subunit gamma, ATP5F1D/subunit delta, ATP5F1E/subunit epsilon, ATP5PF/subunit F6, ATP5PB/subunit b, ATP5PD/subunit d, ATP5PO/subunit OSCP. ATP synthase complex consists of a soluble F(1) head domain (subunits alpha(3) and beta(3)) - the catalytic core - and a membrane F(0) domain - the membrane proton channel (subunits c, a, 8, e, f, g, k and j). These two domains are linked by a central stalk (subunits gamma, delta, and epsilon) rotating inside the F1 region and a stationary peripheral stalk (subunits F6, b, d, and OSCP). Interacts with PRICKLE3.

It is found in the mitochondrion membrane. Subunit 8, of the mitochondrial membrane ATP synthase complex (F(1)F(0) ATP synthase or Complex V) that produces ATP from ADP in the presence of a proton gradient across the membrane which is generated by electron transport complexes of the respiratory chain. ATP synthase complex consist of a soluble F(1) head domain - the catalytic core - and a membrane F(1) domain - the membrane proton channel. These two domains are linked by a central stalk rotating inside the F(1) region and a stationary peripheral stalk. During catalysis, ATP synthesis in the catalytic domain of F(1) is coupled via a rotary mechanism of the central stalk subunits to proton translocation. In vivo, can only synthesize ATP although its ATP hydrolase activity can be activated artificially in vitro. Part of the complex F(0) domain. The protein is ATP synthase F(0) complex subunit 8 of Bos taurus (Bovine).